We begin with the raw amino-acid sequence, 153 residues long: Large ribosomal subunit protein uL15 (153 aa).

The protein belongs to the universal ribosomal protein uL15 family. In terms of assembly, part of the 50S ribosomal subunit.

Functionally, binds to the 23S rRNA. In Pelagibacter ubique (strain HTCC1062), this protein is Large ribosomal subunit protein uL15.